Consider the following 124-residue polypeptide: Putative outer membrane protein CT_569 (124 aa).

Residues 1-31 (MKKTKKRKQSITLVEMMVVITLIGIIGGALA) form the signal peptide.

Its subcellular location is the cell outer membrane. The polypeptide is Putative outer membrane protein CT_569 (Chlamydia trachomatis serovar D (strain ATCC VR-885 / DSM 19411 / UW-3/Cx)).